A 141-amino-acid polypeptide reads, in one-letter code: Lutropin subunit beta (141 aa).

An N-terminal signal peptide occupies residues 1 to 20; sequence MEMLQGLLLWLLLSVGGVWA. 6 disulfides stabilise this stretch: Cys-29/Cys-77, Cys-43/Cys-92, Cys-46/Cys-130, Cys-54/Cys-108, Cys-58/Cys-110, and Cys-113/Cys-120. An N-linked (GlcNAc...) asparagine glycan is attached at Asn-33.

The protein belongs to the glycoprotein hormones subunit beta family. In terms of assembly, heterodimer of a common alpha chain and a unique beta chain which confers biological specificity to thyrotropin, lutropin, follitropin and gonadotropin.

Its subcellular location is the secreted. In terms of biological role, promotes spermatogenesis and ovulation by stimulating the testes and ovaries to synthesize steroids. This Ceratotherium simum (White rhinoceros) protein is Lutropin subunit beta (LHB1).